Consider the following 346-residue polypeptide: Phospholipase A1 (346 aa).

A signal peptide spans 1–26; that stretch reads MRKFAAIFVVFFVQCTHLYSLAQARA. A propeptide spanning residues 27-37 is cleaved from the precursor; that stretch reads EPDPGVVEYLK. Asn44 and Asn72 each carry an N-linked (GlcNAc...) asparagine glycan. Ser167 acts as the Nucleophile in catalysis. Asn185 carries an N-linked (GlcNAc...) asparagine glycan. Active-site charge relay system residues include Asp195 and His258.

This sequence belongs to the AB hydrolase superfamily. Lipase family. In terms of processing, contains six disulfide bonds. Post-translationally, N-glycosylated; contains mannose. Expressed by the venom gland.

The protein resides in the secreted. The catalysed reaction is a 1,2-diacyl-sn-glycero-3-phosphocholine + H2O = a 2-acyl-sn-glycero-3-phosphocholine + a fatty acid + H(+). Functionally, catalyzes the hydrolysis of phosphatidylcholine with phospholipase A1 activity. Induces hemolytic activity. Acts as an allergen. In Solenopsis invicta (Red imported fire ant), this protein is Phospholipase A1.